We begin with the raw amino-acid sequence, 136 residues long: Large ribosomal subunit protein uL16 (136 aa).

This sequence belongs to the universal ribosomal protein uL16 family. Part of the 50S ribosomal subunit.

In terms of biological role, binds 23S rRNA and is also seen to make contacts with the A and possibly P site tRNAs. The protein is Large ribosomal subunit protein uL16 of Rickettsia bellii (strain OSU 85-389).